We begin with the raw amino-acid sequence, 717 residues long: Ribosomal RNA large subunit methyltransferase K/L (717 aa).

A THUMP domain is found at 44 to 155 (DAYKVCIYSY…KQFVNVFLCL (112 aa)).

The protein belongs to the methyltransferase superfamily. RlmKL family.

The protein localises to the cytoplasm. The enzyme catalyses guanosine(2445) in 23S rRNA + S-adenosyl-L-methionine = N(2)-methylguanosine(2445) in 23S rRNA + S-adenosyl-L-homocysteine + H(+). It carries out the reaction guanosine(2069) in 23S rRNA + S-adenosyl-L-methionine = N(2)-methylguanosine(2069) in 23S rRNA + S-adenosyl-L-homocysteine + H(+). Functionally, specifically methylates the guanine in position 2445 (m2G2445) and the guanine in position 2069 (m7G2069) of 23S rRNA. In Francisella tularensis subsp. tularensis (strain WY96-3418), this protein is Ribosomal RNA large subunit methyltransferase K/L.